A 339-amino-acid polypeptide reads, in one-letter code: MKKILVTGGTGFIGSHTVVSLLKSGHQVVILDNLCNSSINILPRLKTITGQEIPFYQGDIRDREILRRIFAENRIDSVIHFAGLKAVGESVAEPMKYYDNNVSGSLVLAEEMARAGVFKIVFSSSATVYGDPGKVPYTEDMQPGDTTSPYGTSKSMVERILSDIQKADPRWSVILLRYFNPIGAHESGLIGEQPNGIPNNLLPYICQVAAGKLPQLAVFGGDYPTPDGTGMRDYIHVMDLAEGHVAAMQAKSNVAGTHLLNLGSGRASSVLEIIRAFEAASGLTIPYEVKPRRAGDLACFYADPSYAKAQIGWQTQRDLTQMMEDSWRWVSNNPNGYDD.

NAD(+) contacts are provided by residues F12–I13, D32–S37, D59–I60, F81–K85, N100, S125, Y150, K154, and F179. Substrate is bound by residues S125 and Y150. The active-site Proton acceptor is Y150. Residues N180, N200–L201, A217–F219, R232, and R293–D296 contribute to the substrate site.

This sequence belongs to the NAD(P)-dependent epimerase/dehydratase family. As to quaternary structure, homodimer. NAD(+) serves as cofactor.

It carries out the reaction UDP-alpha-D-glucose = UDP-alpha-D-galactose. It functions in the pathway carbohydrate metabolism; galactose metabolism. In terms of biological role, involved in the metabolism of galactose. Plays an essential role in the incorporation of galactose into meningococcal lipopolysaccharide surface molecules, which are important for pathogenesis. Catalyzes the conversion of UDP-galactose (UDP-Gal) to UDP-glucose (UDP-Glc) through a mechanism involving the transient reduction of NAD. The polypeptide is UDP-glucose 4-epimerase (galE) (Neisseria meningitidis serogroup C).